Reading from the N-terminus, the 360-residue chain is Histidinol-phosphate aminotransferase (360 aa).

Lysine 218 carries the post-translational modification N6-(pyridoxal phosphate)lysine.

It belongs to the class-II pyridoxal-phosphate-dependent aminotransferase family. Histidinol-phosphate aminotransferase subfamily. In terms of assembly, homodimer. The cofactor is pyridoxal 5'-phosphate.

It carries out the reaction L-histidinol phosphate + 2-oxoglutarate = 3-(imidazol-4-yl)-2-oxopropyl phosphate + L-glutamate. It functions in the pathway amino-acid biosynthesis; L-histidine biosynthesis; L-histidine from 5-phospho-alpha-D-ribose 1-diphosphate: step 7/9. This chain is Histidinol-phosphate aminotransferase, found in Pelagibacter ubique (strain HTCC1062).